Reading from the N-terminus, the 309-residue chain is uncharacterized protein (309 aa).

Residues 272–291 form a disordered region; the sequence is PSLDAPSETVEAFPEPQKNL.

This is an uncharacterized protein from Bacillus subtilis (strain 168).